Reading from the N-terminus, the 486-residue chain is HTH-type transcriptional regulator PrpR (486 aa).

An HTH cro/C1-type domain is found at 22–76; the sequence is LRRLRQERGLTQVALAKALDLSTSYVNQLENDQRPITVPVLLLLTERFDLSAQYF. Residues 33–52 constitute a DNA-binding region (H-T-H motif); sequence QVALAKALDLSTSYVNQLEN.

The protein belongs to the short-chain fatty acyl-CoA assimilation regulator (ScfR) family.

It participates in organic acid metabolism; propanoate degradation. Its pathway is steroid metabolism; cholesterol metabolism. Plays a key role in regulating expression of enzymes involved in the catabolism of short chain fatty acids (SCFA) via both the glyoxylate (acetyl degradation route) and the methylcitrate cycle (propionate degradation route). Required for intracellular growth in macrophages and for the assimilation of cholesterol-derived propionate. PrpR acts as a transcriptional activator of prpDC and icl genes when propionate is the main carbon source, and as a ramB repressor. During growth on propionate, PrpR also acts as a transcriptional repressor of dnaA, which encodes the DnaA initiator protein responsible for initiating chromosomal replication. It is possibly involved in the regulation of genes responsible for controlling cholesterol utilization. The polypeptide is HTH-type transcriptional regulator PrpR (Mycobacterium tuberculosis (strain ATCC 25618 / H37Rv)).